We begin with the raw amino-acid sequence, 1663 residues long: MATDGASCEPDLSRAPEDAAGAAAEAAKKEFDVDTLSKSELRMLLSVMEGELEARDLVIEALRARRKEVFIQERYGRFNLNDPFLALQRDYEAGAGDKEKKPVCTNPLSILEAVMAHCKKMQERMSAQLAAAESRQKKLEMEKLQLQALEQEHKKLAARLEEERGKNKQVVLMLVKECKQLSGKVIEEAQKLEDVMAKLEEEKKKTNELEEELSAEKRRSTEMEAQMEKQLSEFDTEREQLRAKLNREEAHTTDLKEEIDKMRKMIEQLKKGSDSKPSLSLPRKTKDRRLVSISVGTEGTVTRSVACQTDLVTESADHMKKLPLIMPVKSSTGSPLVSANAKGSVCTSATMARPGIDRQASYGDLIGASVPAFPPPSANKIEENGPSTGSTSDPTSSTPPLPSNAAPPTAQTPGIAPQNSQAPPMHSLHSPCANTSLHPGLNPRIQAARFRFQGNANDPDQNGNTTQSPPSRDVSPTSRDNLVAKQLARNTVTQALSRFTSPQAGAPSRPGAPPTGDVGTHPPVGRTSLKTHGVARVDRGNPPPIPPKKPGLSQTPSPPHPQLKVIIDSSRASNTGAKVDNKTVASTPSSLPQGNRVINEENLPKSSSPQLPPKPSIDLTVAPAGCAVSALATSQVGAWPAATPGLNQPACSDSSLVIPTTIAFCSSINPVSASSCRPGASDSLLVTASGWSPSLTPLLMSGGPAPLAGRPTLLQQAAAQGNVTLLSMLLNEEGLDINYSCEDGHSALYSAAKNGHTDCVRLLLSAEAQVNAADKNGFTPLCAAAAQGHFECVELLISYDANINHAADGGQTPLYLACKNGNKECIKLLLEAGTNRSVKTTDGWTPVHAAVDTGNVDSLKLLMYHRIPAHGNSFNEEESESSVFDLDGGEESPEGICKPVVPADLINHANREGWTAAHIAASKGFKNCLEILCRHGGLEPERRDKCNRTVHDVATDDCKHLLENLNALKIPLRISVGEIEPSNYGSDDLECENTICALNIRKQTSWDDFSKAVSQALTNHFQAISSDGWWSLEDVTCNNTTDSNIGLSARSIRSITLGNVPWSVGQSFAQSPWDFMRKNKAEHITVLLSGPQEGCLSSVTYASMIPLQMMQNYLRLVEQYHNVIFHGPEGSLQDYIVHQLALCLKHRQMAAGFSCEIVRAEVDAGFSKEQLLDLFISSACLIPVKQSPSKKKIIIILENLEKSSLSELLRDFLAPLENRSTESPCTFQKGNGLSECYYFHENCFLMGTIAKACLQGSDLLVQQHFRWVQLRWDGEPMQGLLQRFLRRKVVNKFKGQAPSPCDPVCKIVDWALSVWRQLNSCLARLGTPEALLGPKYFLSCPVVPGHAQVTVKWMSKLWNGVIAPRVQEAILSRASVKRQPGFGQTTAKRHPSQGQQAVVKAALSILLNKAVLHGCPLPRAELDQHTADFKGGSFPLSIVSSYNTCNKKKGESGAWRKVNTSPRRKSGRFSLPTWNKPDLSTEGMKNKTISQLNCNRNASLSKQKSLENDLSLTLNLDQRLSLGSDDEADLVKELQSMCSSKSESDISKIADSRDDLRMFDSSGNNPVLSATINNPRMPVSQKEVSPLSSHQTTECSNSKSKTELGVSRVKSFLPVPRSKVTQCSQNTKRSSSSSNTRQIEINNNSKEENWNLHKNGHLEKPNK.

5 disordered regions span residues 1–23 (MATD…AGAA), 203–222 (KKKT…RSTE), 367–440 (GASV…LHPG), 454–478 (GNAN…SPTS), and 498–614 (RFTS…LPPK). The stretch at 119–276 (KKMQERMSAQ…EQLKKGSDSK (158 aa)) forms a coiled coil. A compositionally biased stretch (low complexity) spans 386-396 (PSTGSTSDPTS). The residue at position 498 (Arg498) is an Asymmetric dimethylarginine. Residues 583–593 (TVASTPSSLPQ) show a composition bias toward polar residues. ANK repeat units lie at residues 709–739 (GRPT…DINY), 743–772 (DGHS…QVNA), 776–805 (NGFT…NINH), 809–838 (GGQT…NRSV), 842–871 (DGWT…PAHG), and 912–942 (EGWT…EPER). Residues 1448–1483 (KKGESGAWRKVNTSPRRKSGRFSLPTWNKPDLSTEG) form a disordered region. The residue at position 1524 (Ser1524) is a Phosphoserine. A disordered region spans residues 1560–1663 (DSSGNNPVLS…KNGHLEKPNK (104 aa)). Polar residues-rich tracts occupy residues 1561–1574 (SSGN…TINN) and 1582–1599 (KEVS…SNSK). Residues 1624 to 1638 (SQNTKRSSSSSNTRQ) show a composition bias toward low complexity. Residues 1645–1663 (SKEENWNLHKNGHLEKPNK) show a composition bias toward basic and acidic residues.

In terms of assembly, interacts with CTTN/cortactin SH3 domain. Interacts with STRN, STRN4/zinedin and MOB4/phocein; this interactions mediate the association with the STRIPAK core complex and may regulate dendritic spine distribution of the STRIPAK complex in hippocampal neurons. Activation of glutamate receptors weakens the interaction with STRN and STRN4.

It is found in the cytoplasm. The protein localises to the cell cortex. It localises to the cell projection. The protein resides in the dendritic spine. Functionally, regulates the dendritic spine distribution of CTTN/cortactin in hippocampal neurons, and thus controls dendritic spinogenesis and dendritic spine maintenance. Associates with the striatin-interacting phosphatase and kinase (STRIPAK) core complex to regulate dendritic spine distribution of the STRIPAK complex in hippocampal neurons. The protein is Cortactin-binding protein 2 (CTTNBP2) of Gorilla gorilla gorilla (Western lowland gorilla).